Consider the following 150-residue polypeptide: Ribonuclease HI (150 aa).

The 142-residue stretch at 1–142 (MSDSVELFTD…ADQLANRGVD (142 aa)) folds into the RNase H type-1 domain. Residues Asp10, Glu48, Asp70, and Asp134 each coordinate Mg(2+).

Belongs to the RNase H family. In terms of assembly, monomer. Mg(2+) serves as cofactor.

The protein resides in the cytoplasm. It catalyses the reaction Endonucleolytic cleavage to 5'-phosphomonoester.. In terms of biological role, endonuclease that specifically degrades the RNA of RNA-DNA hybrids. The sequence is that of Ribonuclease HI from Pseudomonas syringae pv. tomato (strain ATCC BAA-871 / DC3000).